The chain runs to 250 residues: 2,3-bisphosphoglycerate-dependent phosphoglycerate mutase (250 aa).

Residues Arg10, His11, Asn17, Gly24, Arg62, Glu89, Tyr92, Lys100, Arg116, Arg117, His184, Gly185, and Asn186 each contribute to the (2R)-2,3-bisphosphoglycerate site. His11 serves as the catalytic Tele-phosphohistidine intermediate. A (2R)-3-phosphoglycerate-binding site is contributed by Gly24. Residues Glu89, Tyr92, Lys100, Arg116, and Arg117 each coordinate (2R)-3-phosphoglycerate. Glu89 serves as the catalytic Proton donor/acceptor. Asn186 is a binding site for (2R)-3-phosphoglycerate.

Belongs to the phosphoglycerate mutase family. BPG-dependent PGAM subfamily. As to expression, ubiquitously expressed with the highest expression in the sub-tegumental muscle layer (at protein level). Expressed in the tegument (at protein level).

It localises to the tegument. The enzyme catalyses (2R)-2-phosphoglycerate = (2R)-3-phosphoglycerate. It functions in the pathway carbohydrate degradation; glycolysis; pyruvate from D-glyceraldehyde 3-phosphate: step 3/5. Strongly activated by 2,3-bisphosphoglycerate (2,3-BPG). Inhibited by vanadate in a dose-dependent manner. Functionally, catalyzes interconversion of 3- and 2-phosphoglycerate with 2,3-bisphosphoglycerate (2,3-BPG) as the primer of the reaction. Schistosomula have significant surface phosphoglycerate mutase activity also without 2,3-BPG. Binds human plasminogen and enhances its conversion to active thrombolytic plasmin in the presence of human tissue plasminogen activator (tPA) in vitro. Host-interactive surface protein, which may degrade vascular blood clots surrounding the worm in vivo and thus may help survival of the parasite in its host microenvironment. In Schistosoma mansoni (Blood fluke), this protein is 2,3-bisphosphoglycerate-dependent phosphoglycerate mutase.